Here is a 304-residue protein sequence, read N- to C-terminus: Glycine--tRNA ligase alpha subunit (304 aa).

Belongs to the class-II aminoacyl-tRNA synthetase family. Tetramer of two alpha and two beta subunits.

The protein resides in the cytoplasm. The enzyme catalyses tRNA(Gly) + glycine + ATP = glycyl-tRNA(Gly) + AMP + diphosphate. The sequence is that of Glycine--tRNA ligase alpha subunit from Streptococcus agalactiae serotype Ia (strain ATCC 27591 / A909 / CDC SS700).